Reading from the N-terminus, the 278-residue chain is MQIMLCAISNIASGNCSEDCKYCTQSAHVRTDIQKYRRKELSQIVLEAKMAKKNEALGFCLVTAGLGLDDEKLEYVCEAAKAVQKEVPNLLLIACNGMASVEQLKELKKAGIFSYNHNLETSKEFFPQICTTHTWESRFQTNLNAKEAGLMLCCGGIYGMGESEENRLSFRKSLQELQPFSTPINFFIANENLKLQTPRLSADEALKIVRDTKEALPQSVVMVAGGREVVLQERQYEIFQAGAGAIVIGDYLTTKGEEPSQDIIKLKEMGFTFASECH.

Positions 1–227 constitute a Radical SAM core domain; it reads MQIMLCAISN…QSVVMVAGGR (227 aa). The [4Fe-4S] cluster site is built by Cys-16, Cys-20, and Cys-23. [2Fe-2S] cluster-binding residues include Cys-60, Cys-95, and Cys-153.

The protein belongs to the radical SAM superfamily. Biotin synthase family. In terms of assembly, homodimer. [4Fe-4S] cluster serves as cofactor. [2Fe-2S] cluster is required as a cofactor.

It carries out the reaction (4R,5S)-dethiobiotin + (sulfur carrier)-SH + 2 reduced [2Fe-2S]-[ferredoxin] + 2 S-adenosyl-L-methionine = (sulfur carrier)-H + biotin + 2 5'-deoxyadenosine + 2 L-methionine + 2 oxidized [2Fe-2S]-[ferredoxin]. It participates in cofactor biosynthesis; biotin biosynthesis; biotin from 7,8-diaminononanoate: step 2/2. Catalyzes the conversion of dethiobiotin (DTB) to biotin by the insertion of a sulfur atom into dethiobiotin via a radical-based mechanism. The chain is Biotin synthase from Campylobacter jejuni subsp. doylei (strain ATCC BAA-1458 / RM4099 / 269.97).